The following is a 190-amino-acid chain: NADH dehydrogenase [ubiquinone] iron-sulfur protein 3 (190 aa).

Belongs to the complex I 30 kDa subunit family. Complex I is composed of about 45 different subunits. This is a component of the iron-sulfur (IP) fragment of the enzyme.

Its subcellular location is the mitochondrion inner membrane. The catalysed reaction is a ubiquinone + NADH + 5 H(+)(in) = a ubiquinol + NAD(+) + 4 H(+)(out). Its function is as follows. Core subunit of the mitochondrial membrane respiratory chain NADH dehydrogenase (Complex I) that is believed to belong to the minimal assembly required for catalysis. Complex I functions in the transfer of electrons from NADH to the respiratory chain. The immediate electron acceptor for the enzyme is believed to be ubiquinone. The sequence is that of NADH dehydrogenase [ubiquinone] iron-sulfur protein 3 (NAD9) from Oryza sativa subsp. japonica (Rice).